We begin with the raw amino-acid sequence, 434 residues long: Zinc finger protein kipf (434 aa).

In terms of domain architecture, ZAD spans 7–88; that stretch reads NVCRTCMDET…EQSYQHFFRV (82 aa). The Zn(2+) site is built by Cys9, Cys12, Cys61, and Cys64. Residues 117–173 form a disordered region; it reads QLKSDRQQDTQQMTKTQKPDDDLSQKQTLQAKLQEGNIDGPPESFTLHPRKRTCRTE. Residues 197–219 form a C2H2-type 1; degenerate zinc finger; sequence YNCPHCSKRFCSQTQLRTHITDL. C2H2-type zinc fingers lie at residues 221 to 243, 249 to 271, and 277 to 299; these read NRCP…LRNH, HKCF…LRTH, and LSCS…RREH. Residues 295-328 form a disordered region; sequence HRREHKQRPGSSKSESTKDPDSDDSDQAQDLKPK. Phosphoserine is present on residues Ser316 and Ser319. 3 C2H2-type zinc fingers span residues 348-370, 377-399, and 404-427; these read PICD…MLTH, KKCT…ERGH, and FRCE…KRIH.

Homodimer; mediated by the ZAD domain. Interacts (via C2H2 type zinc finger 4) with rhi/rhino (via Chromo domain). Dimerization is required for association with DNA and interaction with rhi/rhino. Primarily expressed in ovaries and absent from testes. In ovaries very low levels in germline stem cells and cystoblasts but abundant in developing cysts and polyploid nurse cells.

It localises to the nucleus. Its subcellular location is the chromosome. DNA-binding zinc finger protein that recruits chromo domain protein rhino/rhi to specific chromatin regions enriched in H3K9me2/3 histone methylation, mediating piRNA (piwi-interacting RNA) biogenesis. May bind to GC rich DNA sequences including a 5'-GRGGN-3' sequence motif. Nucleates rhi/rhino accumulation and stabilizes its expansion. Involved in piRNA transposon repression, particularly in the female ovary during oogenesis. The polypeptide is Zinc finger protein kipf (Drosophila melanogaster (Fruit fly)).